We begin with the raw amino-acid sequence, 84 residues long: Large ribosomal subunit protein bL31 (84 aa).

Disordered stretches follow at residues 1–41 (MQHD…DSTN) and 63–84 (RRYG…AADE). Residues 21-30 (EITTRSTMET) show a composition bias toward polar residues. A compositionally biased stretch (acidic residues) spans 68-84 (TDDDEGDDEETEDAADE).

Belongs to the bacterial ribosomal protein bL31 family. Type A subfamily. Part of the 50S ribosomal subunit.

Functionally, binds the 23S rRNA. The sequence is that of Large ribosomal subunit protein bL31 from Salinibacter ruber (strain DSM 13855 / M31).